The chain runs to 468 residues: 3-isopropylmalate dehydratase large subunit (468 aa).

Cys-347, Cys-407, and Cys-410 together coordinate [4Fe-4S] cluster.

The protein belongs to the aconitase/IPM isomerase family. LeuC type 1 subfamily. As to quaternary structure, heterodimer of LeuC and LeuD. [4Fe-4S] cluster is required as a cofactor.

It catalyses the reaction (2R,3S)-3-isopropylmalate = (2S)-2-isopropylmalate. It functions in the pathway amino-acid biosynthesis; L-leucine biosynthesis; L-leucine from 3-methyl-2-oxobutanoate: step 2/4. Functionally, catalyzes the isomerization between 2-isopropylmalate and 3-isopropylmalate, via the formation of 2-isopropylmaleate. The sequence is that of 3-isopropylmalate dehydratase large subunit from Campylobacter jejuni subsp. jejuni serotype O:6 (strain 81116 / NCTC 11828).